The primary structure comprises 432 residues: Alpha-enolase (432 aa).

Serine 40 lines the Mg(2+) pocket. Histidine 158 and glutamate 167 together coordinate substrate. Glutamate 210 serves as the catalytic Proton donor. 3 residues coordinate Mg(2+): aspartate 245, glutamate 293, and aspartate 318. 2 residues coordinate substrate: glutamate 293 and aspartate 318. Residue lysine 343 is the Proton acceptor of the active site. Residues serine 370–serine 373 and lysine 394 contribute to the substrate site.

The protein belongs to the enolase family. In terms of assembly, dimer. The cofactor is Mg(2+).

Its subcellular location is the cytoplasm. The catalysed reaction is (2R)-2-phosphoglycerate = phosphoenolpyruvate + H2O. The protein operates within carbohydrate degradation; glycolysis; pyruvate from D-glyceraldehyde 3-phosphate: step 4/5. Multifunctional enzyme that, as well as its role in glycolysis, plays a part in various processes such as growth control, hypoxia tolerance and allergic responses. This Thunnus albacares (Yellowfin tuna) protein is Alpha-enolase.